Here is a 405-residue protein sequence, read N- to C-terminus: uncharacterized protein (405 aa).

12 helical membrane passes run 19–39 (IVSI…PLAV), 47–67 (VMGF…FATL), 85–105 (IVVF…TAGL), 107–127 (ASLP…LGIG), 156–176 (GIVT…FYHW), 178–198 (GLQA…LLAI), 224–244 (GMAL…ITLF), 252–272 (GAAF…LLFP), 283–303 (VAMI…VATM), 309–329 (IGVL…GVVA), 344–364 (TYTV…GLVM), and 366–386 (WAGV…ALLL).

This sequence belongs to the major facilitator superfamily. YhhS family.

It localises to the cell inner membrane. This is an uncharacterized protein from Shigella flexneri.